A 360-amino-acid polypeptide reads, in one-letter code: Archaemetzincin-2 (360 aa).

H254 is a binding site for Zn(2+). The active-site Proton acceptor is E255. Zn(2+) contacts are provided by H258, H264, C265, C270, C289, and C292.

It belongs to the peptidase M54 family. The cofactor is Zn(2+).

In terms of biological role, probable zinc metalloprotease. This chain is Archaemetzincin-2 (AMZ2), found in Pongo abelii (Sumatran orangutan).